Reading from the N-terminus, the 110-residue chain is MEAKATAKYIRISPQKARLVVDLIRGKKVDDAREILNYSRKRSGQIVGKVLKSAFANAVQNPNIDEKILFVKEIFVDQGPSMKRWRARAQGRAASIKKRMSHITVILDEK.

This sequence belongs to the universal ribosomal protein uL22 family. Part of the 50S ribosomal subunit.

Functionally, this protein binds specifically to 23S rRNA; its binding is stimulated by other ribosomal proteins, e.g. L4, L17, and L20. It is important during the early stages of 50S assembly. It makes multiple contacts with different domains of the 23S rRNA in the assembled 50S subunit and ribosome. Its function is as follows. The globular domain of the protein is located near the polypeptide exit tunnel on the outside of the subunit, while an extended beta-hairpin is found that lines the wall of the exit tunnel in the center of the 70S ribosome. This is Large ribosomal subunit protein uL22 from Syntrophus aciditrophicus (strain SB).